A 1887-amino-acid chain; its full sequence is MSLFFKSIKSKIEETLNHTPQVNLFNNSNNGGNNSNNGGNNSTPTLTKTPSTTNFPYNDYKNYTYKYVYDNTDNYNFNNNNNNNNNNNNNNNNNTKENNFKSIRESASIYKNNEEINNDDNNTIINKKKIEEEEDETNFDTSLIPKLGHEDKDELESDHYITIWGNGIRNYKNCNMSSIGFSEMYNQQKIVLISTGAIHSSFITDQGNLYTFGDGLLGKLGHGNLESYSSPKLVEFFQTKPSLRVVSIANGGKHSLALTICGKVYSWGGNDSCQLGLGNGSSSSYYSLPQLINFNISYNNNNNNNNNNSTNNNNNNNNDGAQQQFSLSQNSSSNNNKIKIVKLSCGTNRSAVITDKGLLFTFGRGDHGRLGLGEQSLLMQSTPKLVQSLQGHFIIDMSSGGGHSLVLTNKGLVFSFGRNDQGQLGIGCFSNQQTIPKQIQWFQTSQQQQQQPINIIKVSAGGYHSIAISDNNDTYAWGRSDYGVLGTSIDVQGDRNLPVLINSNSVVVDNVKFIDVSSGFQHNVAMSIDGSLYSWGCNAGQRLGFKSDENQLTPKKCFINSKDSKPLLFTCGEIITIIVEKRFKEPIIKTELQLPSSTQSQQQTELSLPSSVNSSSDSNFNKSIIDNSSTTTIIKQTNNNIKSTTTTIITRPSSPTPSFLSLANEGKDLLNSTQSNFIEWMTLISKSKGLLNLIQMKATSSLPNLGLSIEKKNKDFDDINRQLKLLVNSNLSLSPLPDNIQSEIDRLVLSRNQLGLGLVSEYQTSIDYWLEIKQQKDLTFLNLSKLLNLSTITTTTTSNTTTTTTATTTTTTTTTTNLINKKVLVHQDEKQQQREKSETELEEEQDEEEEDSEIKNGTLTAIEIQQQSFYLVERLNQGLGNFCNNIMDSTTMVQPLTTATASSTTATATATTTTANTTNSSGIINKNFGESLRLSMEEIQLIVLETQKYAIKYHSLLSQQLQQCDDLINIHRGKLVEVQDFLNKSKLAQSLLEQREKLKSDYRFCKRNSIELSKKIEVIELDYDQNLCDDDDNNHENNSVNNNSNNNNNNNNNNNNNNNNNNNNNNNIDNNINSNSINDSSNNNNNNNNIEKLKNELIKLKKDEQKLLSNQQEINELIIEILDKYVPEFKIKLRANDKISSRIKDTGLLVTDRKFQHYDIIKTLSTHPHNVYLANFNDQLVVLKEFGIGDAFGKQIFERQVSLLKQMNHKCIMPIQAVFYDRNAFMQMEYISGGNLLDWCRNNNNDNENNKRRQPWEIQKIFQQIIQAIAYMHSNCIIHRDLKLENVLIRQDGTPVISDFDLSKDISANVNVTVFNINGGTELYKAPEMKEQNVKGSYSTDIWAFGVMLYKCIFQFVNNNNNGNNGKNNNSDGNENDNNNNNNFLIIREPFLLPEENNLPLPANHSDQRLISLLSSIFQRNPKLRPTAHQIAVHPYFVTSLVEDLLSSRTLIDCREKIAAFRAHISSLSEMAEEMSESLQLTVRREHLVLDFFQFFFKKIESNKLFCRLEVSFQGEKGLDLGGLSSEMYSLLFSDNQIIDNSNNSNNSVSYSIPKNSLFSKKFNLFENSGTESPFYLLNSNDLFNNNNNNNEENNNNNNNNNNNNNNNNNNNNNNNNNNNNNNNNNEENPLLILKNEFTIFKILGKIFLKSIIDGKPIPDCFPTSFFKYLLGVKVNLRDLEIYDPQLAQSFKKVLVLDNIEEYLSTTFEGLIEGGESIPVTDLNKEEFIQRNIERVLVGCRQSKLEAFKSGFMSIDSLNAHFALFSPTELQLLMCGNTLVDSSVLQKNFKFIGFPDTSSTPKDFRRAVDEMNQDEIRLFLRFVTGMVALPLSGFEKSISIIQVPLSQKLPCAHTCSYQLDLPDYNDFDTTKKKLIKMLEYVDGFAFI.

Disordered regions lie at residues 19-55 (TPQVNLFNNSNNGGNNSNNGGNNSTPTLTKTPSTTNF) and 72-98 (TDNYNFNNNNNNNNNNNNNNNNNTKEN). Low complexity-rich tracts occupy residues 26–54 (NNSNNGGNNSNNGGNNSTPTLTKTPSTTN) and 72–97 (TDNYNFNNNNNNNNNNNNNNNNNTKE). RCC1 repeat units lie at residues 206-260 (QGNL…ALTI), 262-314 (GKVY…NNNN), 356-409 (KGLL…VLTN), 411-470 (GLVF…AISD), 472-528 (NDTY…AMSI), and 529-581 (DGSL…IVEK). Positions 299 to 333 (NNNNNNNNNNSTNNNNNNNNDGAQQQFSLSQNSSS) are disordered. 3 disordered regions span residues 594-619 (LPSSTQSQQQTELSLPSSVNSSSDSN), 823-858 (VLVHQDEKQQQREKSETELEEEQDEEEEDSEIKNGT), and 1030-1088 (DDDN…NNNN). Basic and acidic residues predominate over residues 825-839 (VHQDEKQQQREKSET). Residues 840 to 852 (ELEEEQDEEEEDS) show a composition bias toward acidic residues. Low complexity predominate over residues 1036–1088 (ENNSVNNNSNNNNNNNNNNNNNNNNNNNNNNNIDNNINSNSINDSSNNNNNNN). The region spanning 1158–1437 (YDIIKTLSTH…AHQIAVHPYF (280 aa)) is the Protein kinase domain. Residues 1164 to 1172 (LSTHPHNVY) and K1184 each bind ATP. D1281 (proton acceptor) is an active-site residue. The HECT domain occupies 1501-1887 (ESNKLFCRLE…LEYVDGFAFI (387 aa)). The tract at residues 1586–1628 (NNNNNNEENNNNNNNNNNNNNNNNNNNNNNNNNNNNNNNNNEE) is disordered. C1855 (glycyl thioester intermediate) is an active-site residue.

This sequence in the N-terminal section; belongs to the protein kinase superfamily. Ser/Thr protein kinase family. It in the C-terminal section; belongs to the protein kinase superfamily. CAMK Ser/Thr protein kinase family.

It carries out the reaction L-seryl-[protein] + ATP = O-phospho-L-seryl-[protein] + ADP + H(+). It catalyses the reaction L-threonyl-[protein] + ATP = O-phospho-L-threonyl-[protein] + ADP + H(+). The enzyme catalyses S-ubiquitinyl-[E2 ubiquitin-conjugating enzyme]-L-cysteine + [acceptor protein]-L-lysine = [E2 ubiquitin-conjugating enzyme]-L-cysteine + N(6)-ubiquitinyl-[acceptor protein]-L-lysine.. Its pathway is protein modification; protein ubiquitination. This is Bifunctional serine/threonine-protein kinase/NEDD4-like E3 ubiquitin-protein ligase from Dictyostelium discoideum (Social amoeba).